A 417-amino-acid chain; its full sequence is MAEIRNYTINFGPQHPSAHGVLRLVLELDGEVVVRADPHIGLLHRGTEKLAETRTWVQSVPYMDRLDYVSMMCNEHAYCLAIERLLGLEVPIRAQYIRVMFDEITRILNHLLGIGTHALDIGAMTMVLYTFREREDLMDAYEAVSGARMHAAYYRPGGVYRDLPDRMPQYVVNKFKNANTVRELNENRQGSLLDFLEDFTERFNGYCDDYETLLTDNRIWKQRTVGIGVVTPEQAKAWGFTGPMLRGSGVAWDLRKKQPYEVYDRMDFDIPVGKNGDCYDRYLCRMEEMRQSNRIVKQCIDWLRKNPGPVIADNYKVAPPPRERMKGNMEELIHHFKLFTEGMHVPSGEVYAAIEHPKGEFGVYAVSDGANKPYRLKLRAPGFAHLAAMDEIARGHMIADVVAIIGTMDVVFGEIDR.

Belongs to the complex I 49 kDa subunit family. As to quaternary structure, NDH-1 is composed of 14 different subunits. Subunits NuoB, C, D, E, F, and G constitute the peripheral sector of the complex.

It is found in the cell inner membrane. The enzyme catalyses a quinone + NADH + 5 H(+)(in) = a quinol + NAD(+) + 4 H(+)(out). Its function is as follows. NDH-1 shuttles electrons from NADH, via FMN and iron-sulfur (Fe-S) centers, to quinones in the respiratory chain. The immediate electron acceptor for the enzyme in this species is believed to be ubiquinone. Couples the redox reaction to proton translocation (for every two electrons transferred, four hydrogen ions are translocated across the cytoplasmic membrane), and thus conserves the redox energy in a proton gradient. The polypeptide is NADH-quinone oxidoreductase subunit D (Aromatoleum aromaticum (strain DSM 19018 / LMG 30748 / EbN1) (Azoarcus sp. (strain EbN1))).